Reading from the N-terminus, the 306-residue chain is Dermonecrotic toxin LiSicTox-alphaIA1a (306 aa).

The signal sequence occupies residues 1-18 (MLPYIVLVLGCWSVLSQA). Residues 19-26 (AQTDDEER) constitute a propeptide that is removed on maturation. Residue H38 is part of the active site. Mg(2+) contacts are provided by E58 and D60. Catalysis depends on H74, which acts as the Nucleophile. Cystine bridges form between C78-C84 and C80-C223. D118 lines the Mg(2+) pocket.

Belongs to the arthropod phospholipase D family. Class II subfamily. Class IIa sub-subfamily. It depends on Mg(2+) as a cofactor. Expressed by the venom gland.

It is found in the secreted. The catalysed reaction is an N-(acyl)-sphingosylphosphocholine = an N-(acyl)-sphingosyl-1,3-cyclic phosphate + choline. It carries out the reaction an N-(acyl)-sphingosylphosphoethanolamine = an N-(acyl)-sphingosyl-1,3-cyclic phosphate + ethanolamine. The enzyme catalyses a 1-acyl-sn-glycero-3-phosphocholine = a 1-acyl-sn-glycero-2,3-cyclic phosphate + choline. It catalyses the reaction a 1-acyl-sn-glycero-3-phosphoethanolamine = a 1-acyl-sn-glycero-2,3-cyclic phosphate + ethanolamine. The catalysed reaction is 1-hexadecanoyl-sn-glycero-3-phosphocholine = 1-hexadecanoyl-sn-glycero-2,3-cyclic phosphate + choline. Its activity is regulated as follows. Catalytic activity and hemolysis are inhibited by divalent ion chelators (1,10-phenanthroline, EDTA, and EGTA). Dermonecrotic toxins cleave the phosphodiester linkage between the phosphate and headgroup of certain phospholipids (sphingolipid and lysolipid substrates), forming an alcohol (often choline) and a cyclic phosphate. This toxin acts on sphingomyelin (SM) with high activity. It discriminate between the number of carbon atoms in the substrates, since it prefers SM with six carbons in the fatty acid chain (SM6:0) to other SMs (SM12:0 &gt; SM16:0 &gt; SM18:0 &gt; SM2:0 &gt; SM24:0). It also acts on lysophosphatidylcholine (LPC) (LPC16:0 = LPC12:0 &gt; LPC18:0), and lyso-platelet activating factor (LPAF, an alkyl-LPC) but not on phosphatidylcholine (PC). It may also act on ceramide phosphoethanolamine (CPE), lysophosphatidylcholine (LPC) and lysophosphatidylethanolamine (LPE), but not on lysophosphatidylserine (LPS), and lysophosphatidylglycerol (LPG). It acts by transphosphatidylation, releasing exclusively cyclic phosphate products as second products. In vivo, it induces dermonecrosis, vascular permeability, platelet aggregation, inflammatory response, edema and cytotoxicity against renal epithelial cells. It causes direct nephrotoxicity and is directly toxic to liver. It also induces hemolysis in a complement-dependent manner as well as in a complement-independent manner. The hemolysis provoked in a complement-independent manner is composed of several steps. The toxin binds to erythrocyte membranes, hydrolyzes membrane phospholipids (SM and LPC) thus generating metabolism products that cause hemolysis, probably by provoking an increase of calcium inside cells. The calcium influx is due to the opening of L-type calcium channels, since L-type calcium channel blockers inhibit calcium influx. Is lethal to mice when intraperitoneally injected. The protein is Dermonecrotic toxin LiSicTox-alphaIA1a of Loxosceles intermedia (Brown spider).